The chain runs to 162 residues: Precursor protein UG (162 aa).

The first 19 residues, 1-19 (MERILLCFIVATLVAISMA), serve as a signal peptide directing secretion. The propeptide occupies 20-23 (NPRP). 2 cysteine pairs are disulfide-bonded: cysteine 30–cysteine 42 and cysteine 33–cysteine 49. The propeptide occupies 56–59 (VPKP). 2 disulfides stabilise this stretch: cysteine 66–cysteine 78 and cysteine 69–cysteine 85. Positions 92–95 (VPKP) are excised as a propeptide. 2 disulfides stabilise this stretch: cysteine 102/cysteine 114 and cysteine 105/cysteine 121. Positions 128-131 (VPKP) are excised as a propeptide. 2 cysteine pairs are disulfide-bonded: cysteine 138/cysteine 150 and cysteine 141/cysteine 157.

This sequence belongs to the sea anemone BBH family.

The protein localises to the secreted. Its subcellular location is the nematocyst. Its function is as follows. Affects the ASIC3 channel (ACCN3) and produces analgesic effects. It produces a reversible inhibition effect on both the transient and the sustained current of human ASIC3 channels expressed in X.laevis oocytes. It completely blocks the transient component (IC(50)=10 uM) and partially (48%) inhibits the amplitude of the sustained component (IC(50)=1.44 uM). Using in vivo tests in mice, it reverses inflammatory and acid-induced pain. In terms of biological role, does not affect the ASIC3 channel. Does not cause lethality or paralysis of noble crayfish (A.astacus) at a dose of 1 mg/kg. The protein is Precursor protein UG of Urticina grebelnyi (Painted anemone).